The following is an 880-amino-acid chain: Translation initiation factor IF-2 (880 aa).

The segment at 259 to 281 is disordered; sequence KNREEARAVGRSSKSQSKRKSST. The 170-residue stretch at 379–548 folds into the tr-type G domain; sequence SRAPVVTIMG…LLQAEVLELK (170 aa). The interval 388 to 395 is G1; that stretch reads GHVDHGKT. 388–395 provides a ligand contact to GTP; the sequence is GHVDHGKT. Residues 413 to 417 are G2; the sequence is GITQH. The tract at residues 434–437 is G3; it reads DTPG. GTP is bound by residues 434–438 and 488–491; these read DTPGH and NKID. Residues 488–491 form a G4 region; that stretch reads NKID. Residues 524–526 form a G5 region; the sequence is SAK.

The protein belongs to the TRAFAC class translation factor GTPase superfamily. Classic translation factor GTPase family. IF-2 subfamily.

The protein localises to the cytoplasm. One of the essential components for the initiation of protein synthesis. Protects formylmethionyl-tRNA from spontaneous hydrolysis and promotes its binding to the 30S ribosomal subunits. Also involved in the hydrolysis of GTP during the formation of the 70S ribosomal complex. This chain is Translation initiation factor IF-2, found in Baumannia cicadellinicola subsp. Homalodisca coagulata.